The chain runs to 202 residues: Holliday junction branch migration complex subunit RuvA (202 aa).

Residues M1–A64 form a domain I region. The interval G65–P143 is domain II. A flexible linker region spans residues A144–L152. Residues V153–P202 are domain III.

Belongs to the RuvA family. Homotetramer. Forms an RuvA(8)-RuvB(12)-Holliday junction (HJ) complex. HJ DNA is sandwiched between 2 RuvA tetramers; dsDNA enters through RuvA and exits via RuvB. An RuvB hexamer assembles on each DNA strand where it exits the tetramer. Each RuvB hexamer is contacted by two RuvA subunits (via domain III) on 2 adjacent RuvB subunits; this complex drives branch migration. In the full resolvosome a probable DNA-RuvA(4)-RuvB(12)-RuvC(2) complex forms which resolves the HJ.

Its subcellular location is the cytoplasm. Its function is as follows. The RuvA-RuvB-RuvC complex processes Holliday junction (HJ) DNA during genetic recombination and DNA repair, while the RuvA-RuvB complex plays an important role in the rescue of blocked DNA replication forks via replication fork reversal (RFR). RuvA specifically binds to HJ cruciform DNA, conferring on it an open structure. The RuvB hexamer acts as an ATP-dependent pump, pulling dsDNA into and through the RuvAB complex. HJ branch migration allows RuvC to scan DNA until it finds its consensus sequence, where it cleaves and resolves the cruciform DNA. In Laribacter hongkongensis (strain HLHK9), this protein is Holliday junction branch migration complex subunit RuvA.